The chain runs to 208 residues: Protein-L-isoaspartate O-methyltransferase (208 aa).

The active site involves Ser59.

The protein belongs to the methyltransferase superfamily. L-isoaspartyl/D-aspartyl protein methyltransferase family.

The protein resides in the cytoplasm. The catalysed reaction is [protein]-L-isoaspartate + S-adenosyl-L-methionine = [protein]-L-isoaspartate alpha-methyl ester + S-adenosyl-L-homocysteine. Its function is as follows. Catalyzes the methyl esterification of L-isoaspartyl residues in peptides and proteins that result from spontaneous decomposition of normal L-aspartyl and L-asparaginyl residues. It plays a role in the repair and/or degradation of damaged proteins. In Klebsiella pneumoniae subsp. pneumoniae (strain ATCC 700721 / MGH 78578), this protein is Protein-L-isoaspartate O-methyltransferase.